We begin with the raw amino-acid sequence, 270 residues long: Acyl-[acyl-carrier-protein]--UDP-N-acetylglucosamine O-acyltransferase (270 aa).

This sequence belongs to the transferase hexapeptide repeat family. LpxA subfamily. Homotrimer.

Its subcellular location is the cytoplasm. The enzyme catalyses a (3R)-hydroxyacyl-[ACP] + UDP-N-acetyl-alpha-D-glucosamine = a UDP-3-O-[(3R)-3-hydroxyacyl]-N-acetyl-alpha-D-glucosamine + holo-[ACP]. It participates in glycolipid biosynthesis; lipid IV(A) biosynthesis; lipid IV(A) from (3R)-3-hydroxytetradecanoyl-[acyl-carrier-protein] and UDP-N-acetyl-alpha-D-glucosamine: step 1/6. Its function is as follows. Involved in the biosynthesis of lipid A, a phosphorylated glycolipid that anchors the lipopolysaccharide to the outer membrane of the cell. This is Acyl-[acyl-carrier-protein]--UDP-N-acetylglucosamine O-acyltransferase from Helicobacter pylori (strain P12).